A 434-amino-acid chain; its full sequence is Serine protease HTRA2, mitochondrial (434 aa).

A disordered region spans residues 34–65 (YSNNTANITTDSSSSSNNNSNRNNKNDNNNED). Positions 35 to 60 (SNNTANITTDSSSSSNNNSNRNNKND) are enriched in low complexity. A helical membrane pass occupies residues 74–92 (LVRFFVPFSLGAVASSLVM). The IAP-binding motif lies at 85–88 (AVAS). Residues 151–314 (SNGSGFVIEQ…IPIDYVKVFL (164 aa)) form a serine protease region. Catalysis depends on charge relay system residues histidine 169, aspartate 201, and serine 278. Residues 337-424 (MGITMLTLTP…NMIIMRGVKQ (88 aa)) form the PDZ domain.

Belongs to the peptidase S1C family. As to quaternary structure, interacts with th/DIAP1 (via BIR 2 domain).

It localises to the mitochondrion intermembrane space. It is found in the mitochondrion membrane. It catalyses the reaction Cleavage of non-polar aliphatic amino-acids at the P1 position, with a preference for Val, Ile and Met. At the P2 and P3 positions, Arg is selected most strongly with a secondary preference for other hydrophilic residues.. Functionally, serine protease that shows proteolytic activity against a non-specific substrate beta-casein. Promotes or induces cell death either by direct binding to and inhibition of BIRC proteins (also called inhibitor of apoptosis proteins, IAPs), leading to an increase in caspase activity, or by a BIRC inhibition-independent, caspase-independent and serine protease activity-dependent mechanism. Can antagonize antiapoptotic activity of th/Diap1 by directly inducing the degradation of th/Diap1. This chain is Serine protease HTRA2, mitochondrial, found in Drosophila willistoni (Fruit fly).